The chain runs to 424 residues: MTNKKAFKETCKFIAGGVNSPVRAFANVQSEPKFISHGKGAYIFDIDGNSYIDYVQSWGPLLFGHCDKDIQKACQKALHKGSSFGAPTLLETELAKLVLSDFPHLEKIRFVSSGTEATMSAIRLARGFTKKDKILKFEGCYHGHSDSLLVSAGSGAATFNSPSSLGVLEDVAKHTLVAKYNDINSVKELFEKNKDIACVIIEPIAGNMGLVPAKQDFLEELAKICKNNQTLLIFDEVMSGYRASYLGSYGINHIQADIITFGKVIGGGLPAAAFASRAEIMDILSPLGGVYQAGTLSGNPLAMAAGIASLTKAKKKTKLYDKLGKLAKKLTQGMKKLADEKGLPLQACHVGSMFGYFFTKDPVSNYQDALKSDLALFSKFHKNMLENGIYLAPSQFETGFICSKMDDKIIDTTLEAVRESFKRI.

K263 bears the N6-(pyridoxal phosphate)lysine mark.

It belongs to the class-III pyridoxal-phosphate-dependent aminotransferase family. HemL subfamily. As to quaternary structure, homodimer. Pyridoxal 5'-phosphate serves as cofactor.

Its subcellular location is the cytoplasm. The enzyme catalyses (S)-4-amino-5-oxopentanoate = 5-aminolevulinate. It participates in porphyrin-containing compound metabolism; protoporphyrin-IX biosynthesis; 5-aminolevulinate from L-glutamyl-tRNA(Glu): step 2/2. The protein is Glutamate-1-semialdehyde 2,1-aminomutase of Campylobacter jejuni subsp. jejuni serotype O:2 (strain ATCC 700819 / NCTC 11168).